The primary structure comprises 1100 residues: DNA-directed RNA polymerase subunit beta (1100 aa).

The segment at 1064–1100 (YEEDKEVDLMADVNQRRTPSRPTYESMSVGDIDDDDD) is disordered. The span at 1079-1089 (RRTPSRPTYES) shows a compositional bias: polar residues.

The protein belongs to the RNA polymerase beta chain family. In cyanobacteria the RNAP catalytic core is composed of 2 alpha, 1 beta, 1 beta', 1 gamma and 1 omega subunit. When a sigma factor is associated with the core the holoenzyme is formed, which can initiate transcription.

It catalyses the reaction RNA(n) + a ribonucleoside 5'-triphosphate = RNA(n+1) + diphosphate. In terms of biological role, DNA-dependent RNA polymerase catalyzes the transcription of DNA into RNA using the four ribonucleoside triphosphates as substrates. The sequence is that of DNA-directed RNA polymerase subunit beta from Synechococcus elongatus (strain ATCC 33912 / PCC 7942 / FACHB-805) (Anacystis nidulans R2).